Here is a 118-residue protein sequence, read N- to C-terminus: Large ribosomal subunit protein bL20 (118 aa).

This sequence belongs to the bacterial ribosomal protein bL20 family.

Functionally, binds directly to 23S ribosomal RNA and is necessary for the in vitro assembly process of the 50S ribosomal subunit. It is not involved in the protein synthesizing functions of that subunit. The protein is Large ribosomal subunit protein bL20 of Marinomonas sp. (strain MWYL1).